The sequence spans 208 residues: Small ribosomal subunit protein uS5 (208 aa).

The segment at 1–38 (MPGRERRDGGRSADDNQKKNDRRGGRRDDRRNQQQDER) is disordered. The S5 DRBM domain maps to 41–104 (YIERVVTINR…EEARKNFFRV (64 aa)).

The protein belongs to the universal ribosomal protein uS5 family. In terms of assembly, part of the 30S ribosomal subunit. Contacts proteins S4 and S8.

Functionally, with S4 and S12 plays an important role in translational accuracy. Its function is as follows. Located at the back of the 30S subunit body where it stabilizes the conformation of the head with respect to the body. In Corynebacterium diphtheriae (strain ATCC 700971 / NCTC 13129 / Biotype gravis), this protein is Small ribosomal subunit protein uS5.